A 154-amino-acid chain; its full sequence is Endoribonuclease YbeY (154 aa).

Zn(2+)-binding residues include histidine 115, histidine 119, and histidine 125.

This sequence belongs to the endoribonuclease YbeY family. Zn(2+) is required as a cofactor.

The protein resides in the cytoplasm. In terms of biological role, single strand-specific metallo-endoribonuclease involved in late-stage 70S ribosome quality control and in maturation of the 3' terminus of the 16S rRNA. The sequence is that of Endoribonuclease YbeY from Halorhodospira halophila (strain DSM 244 / SL1) (Ectothiorhodospira halophila (strain DSM 244 / SL1)).